Consider the following 240-residue polypeptide: U1 small nuclear ribonucleoprotein C (240 aa).

The segment at Tyr-4–Glu-36 adopts a Matrin-type zinc-finger fold. Disordered stretches follow at residues Gly-86–His-122 and Ile-175–Ala-240. Composition is skewed to basic and acidic residues over residues Asp-178 to Ile-194 and Asp-203 to His-219. A compositionally biased stretch (polar residues) spans Thr-226–Ala-240.

This sequence belongs to the U1 small nuclear ribonucleoprotein C family. As to quaternary structure, U1 snRNP is composed of the 7 core Sm proteins B/B', D1, D2, D3, E, F and G that assemble in a heptameric protein ring on the Sm site of the small nuclear RNA to form the core snRNP, and at least 3 U1 snRNP-specific proteins U1-70K, U1-A and U1-C. U1-C interacts with U1 snRNA and the 5' splice-site region of the pre-mRNA.

Its subcellular location is the nucleus. In terms of biological role, component of the spliceosomal U1 snRNP, which is essential for recognition of the pre-mRNA 5' splice-site and the subsequent assembly of the spliceosome. U1-C is directly involved in initial 5' splice-site recognition for both constitutive and regulated alternative splicing. The interaction with the 5' splice-site seems to precede base-pairing between the pre-mRNA and the U1 snRNA. Stimulates commitment or early (E) complex formation by stabilizing the base pairing of the 5' end of the U1 snRNA and the 5' splice-site region. The protein is U1 small nuclear ribonucleoprotein C of Plasmodium vivax (strain Salvador I).